A 222-amino-acid polypeptide reads, in one-letter code: ATP-dependent dethiobiotin synthetase BioD (222 aa).

12–17 (DVGKTI) contacts ATP. Thr-16 lines the Mg(2+) pocket. The active site involves Lys-37. Position 41 (Thr-41) interacts with substrate. ATP-binding positions include Asp-49, 107–110 (EGAG), 167–168 (GS), and 197–199 (AEG). Residues Asp-49 and Glu-107 each coordinate Mg(2+).

It belongs to the dethiobiotin synthetase family. As to quaternary structure, homodimer. Mg(2+) serves as cofactor.

The protein resides in the cytoplasm. It catalyses the reaction (7R,8S)-7,8-diammoniononanoate + CO2 + ATP = (4R,5S)-dethiobiotin + ADP + phosphate + 3 H(+). The protein operates within cofactor biosynthesis; biotin biosynthesis; biotin from 7,8-diaminononanoate: step 1/2. Functionally, catalyzes a mechanistically unusual reaction, the ATP-dependent insertion of CO2 between the N7 and N8 nitrogen atoms of 7,8-diaminopelargonic acid (DAPA, also called 7,8-diammoniononanoate) to form a ureido ring. This chain is ATP-dependent dethiobiotin synthetase BioD, found in Corynebacterium diphtheriae (strain ATCC 700971 / NCTC 13129 / Biotype gravis).